We begin with the raw amino-acid sequence, 713 residues long: Mitochondrial intermediate peptidase (713 aa).

The transit peptide at 1–35 directs the protein to the mitochondrion; the sequence is MLCVGRLGGLGARAAALPPRRAGRGSLEAGIRARR. K126 is modified (N6-acetyllysine). H495 is a binding site for Zn(2+). The active site involves E496. Zn(2+) is bound by residues H499 and H502.

This sequence belongs to the peptidase M3 family. As to quaternary structure, monomer. The cofactor is Zn(2+).

Its subcellular location is the mitochondrion matrix. It carries out the reaction Release of an N-terminal octapeptide as second stage of processing of some proteins imported into the mitochondrion.. Activity is divalent cation-dependent. It is stimulated by manganese, magnesium or calcium ions and reversibly inhibited by zinc, cobalt and iron. Cleaves proteins, imported into the mitochondrion, to their mature size. The sequence is that of Mitochondrial intermediate peptidase (MIPEP) from Homo sapiens (Human).